Here is a 373-residue protein sequence, read N- to C-terminus: Glutamine synthetase (373 aa).

The region spanning 24–106 is the GS beta-grasp domain; it reads EKVQAMYIWI…VLCEVFKYNR (83 aa). Residues 113–373 form the GS catalytic domain; the sequence is LRHTCRRIMD…TGDEPFEYKN (261 aa). ATP is bound at residue Glu134. Glu134, Glu136, Glu196, and Glu203 together coordinate Mn(2+). 203–208 provides a ligand contact to ATP; sequence EFQVGP. L-glutamate is bound at residue 246-247; the sequence is NW. His253 serves as a coordination point for Mn(2+). ATP is bound by residues 255-257, Arg319, and Arg324; that span reads NFS. Arg319 provides a ligand contact to L-glutamate. ADP is bound at residue 336–338; sequence YFE. Glu338 contributes to the Mn(2+) binding site. An L-glutamate-binding site is contributed by Arg340.

Belongs to the glutamine synthetase family. As to quaternary structure, homooctamer and homotetramer. It depends on biotin as a cofactor. Requires Mg(2+) as cofactor. Mn(2+) serves as cofactor. As to expression, expressed in retina, brain and liver. Little or no detectable expression in breast muscle, pancreas and spleen.

Its subcellular location is the cytoplasm. The protein localises to the mitochondrion. It carries out the reaction L-glutamate + NH4(+) + ATP = L-glutamine + ADP + phosphate + H(+). The enzyme catalyses L-glutamate + H(+) = 4-aminobutanoate + CO2. Its activity is regulated as follows. Glutamate to glutamine ratio influences catalytic activity. At glutamate to glutamine ratios greater than 4, decarboxylase activity ceases. In the presence of manganese, synthetase activity is limited to concentrations between 10 mM and 20 mM, whereas decarboxylase activity is not affected. Both catalytic activities are inhibited by avidin. In terms of biological role, glutamine synthetase that catalyzes the ATP-dependent conversion of glutamate and ammonia to glutamine. When expressed in liver, it may be involved in detoxifying intramitochondrially generated ammonia. Also acts as glutamate decarboxylase by catalyzing the production of 4-aminobutanoate (gamma-aminobutyric acid, GABA) in a pyridoxal phosphate-independent manner. This chain is Glutamine synthetase, found in Gallus gallus (Chicken).